A 263-amino-acid chain; its full sequence is Carbon monoxide dehydrogenase accessory protein CooC (263 aa).

7–14 serves as a coordination point for ATP; sequence GKGGVGKS.

Its function is as follows. Involved in the insertion of nickel into the carbon monoxide dehydrogenase (CODH). In Rhodospirillum rubrum, this protein is Carbon monoxide dehydrogenase accessory protein CooC (cooC).